The chain runs to 591 residues: MALIQTSLIWVAYAVAVAILFLIASTFVYVYQKPRDRAAAVTIVCIFTTLALLATVLLIPVDVALVSSTSRSSLGRKKDWATPDKVDSIVYTLRIVYYTLYSLDAVLCLLVIPFTYFWYEEYDQDAAEHGEQTAAQRIGGALKWTLGFLIFVVAIFLVGFFVPFAKQAKEDKRLDLDYFKHLLSENHGERALSFGLGFLITVGTVLFVLYTGAGMALLPVAMIKSAPSVSAPTLAANTASQLETNRERQRQLEGRNEGREGGLDSRDRRELEALVREERTLIRRERLAAESSGEDRHWIVKAWIKTEAFFRPLKLIGGLILLVFALVIFASMLITGIDKAKNSICGAHCGYILGHINIFQPLNWVLVKSAKVFPIDYVLFLLLVLFLFSASVVGIATAGIRFLWVTIFKIRKGQTSPQALLMATVLLTLITLAINYSVAMVVAPQYATWGPQTYCDMKTNSLDEQPDCAEHKDLIKPCSELATNPAAQQVCTPSVLSTFINRVTINFPFFGIVLFWAQFAFLGVYLIVFLTTLFKAPTLDQEQIDRDLEEEEDEGLLASTGRRFGAAWSDVTGRATKPANYGATERDERIQ.

The next 5 helical transmembrane spans lie at 8–28, 39–59, 95–115, 144–164, and 198–218; these read LIWV…STFV, AAVT…VLLI, IVYY…IPFT, WTLG…FVPF, and FLIT…MALL. The tract at residues 238 to 266 is disordered; that stretch reads TASQLETNRERQRQLEGRNEGREGGLDSR. Residues 244-266 are compositionally biased toward basic and acidic residues; sequence TNRERQRQLEGRNEGREGGLDSR. The next 4 helical transmembrane spans lie at 315–335, 378–398, 422–442, and 509–529; these read LIGG…MLIT, VLFL…IATA, MATV…AMVV, and FFGI…LIVF.

This sequence belongs to the LIMR family. LMBRD1 subfamily.

The protein localises to the lysosome membrane. Its function is as follows. Probable lysosomal cobalamin transporter. Required to export cobalamin from lysosomes allowing its conversion to cofactors. This is Probable lysosomal cobalamin transporter from Pyrenophora tritici-repentis (strain Pt-1C-BFP) (Wheat tan spot fungus).